Here is a 369-residue protein sequence, read N- to C-terminus: UPF0284 protein sll1500 (369 aa).

This sequence belongs to the UPF0284 family.

This Synechocystis sp. (strain ATCC 27184 / PCC 6803 / Kazusa) protein is UPF0284 protein sll1500.